A 206-amino-acid chain; its full sequence is GCN5-like protein acetyltransferase Rv2170 (206 aa).

The N-acetyltransferase domain occupies 44-205; it reads EHIRRRGWQA…AFAILGRTLP (162 aa). Tyr-176 functions as the Proton donor in the catalytic mechanism.

It belongs to the acetyltransferase family.

The enzyme catalyses L-lysyl-[protein] + acetyl-CoA = N(6)-acetyl-L-lysyl-[protein] + CoA + H(+). It carries out the reaction propanoyl-CoA + L-lysyl-[protein] = N(6)-propanoyl-L-lysyl-[protein] + CoA + H(+). The catalysed reaction is succinyl-CoA + L-lysyl-[protein] = N(6)-succinyl-L-lysyl-[protein] + CoA + H(+). Functionally, acetyltransferase involved in the post-translational regulation of the central metabolic enzyme isocitrate dehydrogenase 1 (ICDH-1) through lysine acetylation. Catalyzes the acetylation of ICDH-1 at Lys-30 and Lys-129, using acetyl-CoA as a donor, leading to a reduction of ICDH-1 enzyme activity. Can also use propionyl-CoA and succinyl-CoA as donors. Cannot act on the isocitrate dehydrogenase 2 (ICDH-2). Might play a role in regulating the TCA cycle and methylcitrate cycle when M.tuberculosis utilizes fatty acid as carbon source. In terms of biological role, in addition, it can acetylate the amino group of isoniazid (INH), one of the first-line drugs used for the treatment of tuberculosis, thereby canceling out the drug toxicity. Acts by catalyzing the transfer of an acetyl group from acetyl-CoA to INH. Following acetylation, INH is broken down into isonicotinic acid and acetylhydrazine. M.smegmatis and M.tuberculosis H37Ra strains overexpressing Rv2170 are resistant to INH. Has little or no acetyltransferase activity with other antibiotics such as streptomycin, neomycin, kanamycin, amikacin, apramycin and gentamicin. The protein is GCN5-like protein acetyltransferase Rv2170 of Mycobacterium tuberculosis (strain ATCC 25618 / H37Rv).